The chain runs to 210 residues: Late histone H1 (210 aa).

Disordered regions lie at residues 1 to 21 and 86 to 210; these read MSAA…HPPT and SFKL…AAKK. Residues 17 to 91 enclose the H15 domain; the sequence is AHPPTSQMVV…GASGSFKLGK (75 aa). A compositionally biased stretch (basic residues) spans 104-113; it reads AAAKKAKLAA. Residues 114–123 are compositionally biased toward basic and acidic residues; the sequence is KKKEQKEKKA. Residues 124–210 are compositionally biased toward basic residues; it reads AKTKARKEKL…KPAAKKAAKK (87 aa).

The protein belongs to the histone H1/H5 family.

It is found in the nucleus. It localises to the chromosome. Functionally, histones H1 are necessary for the condensation of nucleosome chains into higher-order structures. The chain is Late histone H1 from Lytechinus pictus (Painted sea urchin).